We begin with the raw amino-acid sequence, 208 residues long: Putative 3-methyladenine DNA glycosylase (208 aa).

It belongs to the DNA glycosylase MPG family.

The protein is Putative 3-methyladenine DNA glycosylase of Lactobacillus delbrueckii subsp. bulgaricus (strain ATCC BAA-365 / Lb-18).